The primary structure comprises 829 residues: RNA-directed RNA polymerase (829 aa).

Residues M1–R39 are disordered.

As to quaternary structure, forms a ribonucleoprotein complex with the 20S RNA, where a single polymerase molecule binds to a single viral RNA genome. Since the viral RNA is not encapsidated, ribonucleoprotein complex formation appears to be the strategy to survive in the host as persistent virus.

It is found in the host cytoplasm. It carries out the reaction RNA(n) + a ribonucleoside 5'-triphosphate = RNA(n+1) + diphosphate. Functionally, RNA-directed RNA polymerase that replicates the viral (+) and (-) genome. The protein is RNA-directed RNA polymerase of Saccharomyces cerevisiae (Baker's yeast).